The chain runs to 274 residues: Large ribosomal subunit protein uL2 (274 aa).

Residues 223 to 258 are disordered; the sequence is VAMNPVDHPHGGGEGRTSGGRHPVTPWGIPTKGYKT.

The protein belongs to the universal ribosomal protein uL2 family. Part of the 50S ribosomal subunit. Forms a bridge to the 30S subunit in the 70S ribosome.

Its function is as follows. One of the primary rRNA binding proteins. Required for association of the 30S and 50S subunits to form the 70S ribosome, for tRNA binding and peptide bond formation. It has been suggested to have peptidyltransferase activity; this is somewhat controversial. Makes several contacts with the 16S rRNA in the 70S ribosome. The chain is Large ribosomal subunit protein uL2 from Geotalea daltonii (strain DSM 22248 / JCM 15807 / FRC-32) (Geobacter daltonii).